The chain runs to 487 residues: UDP-glucosyl transferase 73CC6 (487 aa).

The active-site Proton acceptor is the His-17. Asp-114 (charge relay) is an active-site residue. Residues Ser-282, Trp-346, Ala-347, His-364, Asn-368, Ser-369, Glu-372, and Tyr-386 each contribute to the UDP site.

The protein belongs to the UDP-glycosyltransferase family. As to expression, mainly expressed in flowers and flower buds and, to a lesser extent, in leaves, stems and roots.

The protein operates within secondary metabolite biosynthesis; terpenoid biosynthesis. Its function is as follows. Component of the oleanane-type triterpene saponins (e.g. saponarioside A and saponarioside B) biosynthetic pathway, leading to the production of natural products with detergent properties used as traditional sources of soap. A glycosyltransferase that mediates the conversion of QA-di to QA-tri via the elongation of the C-3 sugar chain with a D-xylose. The polypeptide is UDP-glucosyl transferase 73CC6 (Saponaria officinalis (Common soapwort)).